We begin with the raw amino-acid sequence, 959 residues long: Translation initiation factor IF-2 (959 aa).

The disordered stretch occupies residues serine 33–leucine 373. The span at isoleucine 46–alanine 60 shows a compositional bias: polar residues. Basic and acidic residues predominate over residues alanine 63–alanine 73. A compositionally biased stretch (low complexity) spans alanine 76–serine 100. Composition is skewed to basic and acidic residues over residues phenylalanine 112–alanine 125, serine 134–glutamine 143, and asparagine 179–arginine 192. A compositionally biased stretch (polar residues) spans serine 193–alanine 211. 2 stretches are compositionally biased toward basic and acidic residues: residues alanine 234 to alanine 258 and glutamine 266 to proline 276. Low complexity predominate over residues alanine 277 to alanine 287. Over residues asparagine 306–lysine 323 the composition is skewed to basic and acidic residues. Low complexity predominate over residues serine 328–asparagine 346. Basic residues predominate over residues lysine 347 to asparagine 357. A tr-type G domain is found at glutamate 460–lysine 629. Residues glycine 469–threonine 476 form a G1 region. A GTP-binding site is contributed by glycine 469–threonine 476. The tract at residues glycine 494–histidine 498 is G2. The tract at residues aspartate 515–glycine 518 is G3. GTP contacts are provided by residues aspartate 515 to histidine 519 and asparagine 569 to aspartate 572. The G4 stretch occupies residues asparagine 569 to aspartate 572. Residues serine 605–lysine 607 form a G5 region.

Belongs to the TRAFAC class translation factor GTPase superfamily. Classic translation factor GTPase family. IF-2 subfamily.

It is found in the cytoplasm. Functionally, one of the essential components for the initiation of protein synthesis. Protects formylmethionyl-tRNA from spontaneous hydrolysis and promotes its binding to the 30S ribosomal subunits. Also involved in the hydrolysis of GTP during the formation of the 70S ribosomal complex. This Streptococcus equi subsp. zooepidemicus (strain H70) protein is Translation initiation factor IF-2.